The sequence spans 345 residues: MSRKKTIKDYENLAATRNHEVISVSNKETPSQGDITLLCKTCNKEFTTTTISYQNARKTGCPHCKATSASLYWTGRARTKTPEQAKKNAEIKEHINKTRKEKGKAFANIKNKEDLKEKLTNDLYLPNGEKNAYNDFILKRLNDPVTGKMMEKHHIIPLHAGGPDEKWNLISLTPEDHIEAHNLRYLVYNETGDKNTIKFRNKTPNVTDQISKAKALGNETRRAQGTGIYEPGMSSKAGKIGGSVKSVEKDLKQSTKMTSGVYDALYNGSRWKHTKTNTEIVIPPNTIVKMPQLVEKLIEALPPCEEKTRLAGAKLTTATSALARVIKGKNEGGRSSYFGWSICKE.

Its subcellular location is the plastid. The protein resides in the chloroplast. This is an uncharacterized protein from Chlamydomonas moewusii (Chlamydomonas eugametos).